The primary structure comprises 340 residues: GTP 3',8-cyclase (340 aa).

Positions 20 to 246 (RFERQYVYLR…PKALSDGPAK (227 aa)) constitute a Radical SAM core domain. R29 serves as a coordination point for GTP. 2 residues coordinate [4Fe-4S] cluster: C36 and C40. Y42 lines the S-adenosyl-L-methionine pocket. Residue C43 participates in [4Fe-4S] cluster binding. R79 is a binding site for GTP. Position 83 (G83) interacts with S-adenosyl-L-methionine. T110 provides a ligand contact to GTP. S134 provides a ligand contact to S-adenosyl-L-methionine. Residue K171 coordinates GTP. M205 lines the S-adenosyl-L-methionine pocket. 2 residues coordinate [4Fe-4S] cluster: C268 and C271. 273-275 (RLR) provides a ligand contact to GTP. C285 serves as a coordination point for [4Fe-4S] cluster.

The protein belongs to the radical SAM superfamily. MoaA family. As to quaternary structure, monomer and homodimer. The cofactor is [4Fe-4S] cluster.

The catalysed reaction is GTP + AH2 + S-adenosyl-L-methionine = (8S)-3',8-cyclo-7,8-dihydroguanosine 5'-triphosphate + 5'-deoxyadenosine + L-methionine + A + H(+). Its pathway is cofactor biosynthesis; molybdopterin biosynthesis. Its function is as follows. Catalyzes the cyclization of GTP to (8S)-3',8-cyclo-7,8-dihydroguanosine 5'-triphosphate. The sequence is that of GTP 3',8-cyclase from Actinobacillus pleuropneumoniae serotype 3 (strain JL03).